We begin with the raw amino-acid sequence, 113 residues long: U11-theraphotoxin-Hhn1a (113 aa).

A signal peptide spans 1 to 21 (MNTVRVTFLLVFVLAVSLGQA). Positions 22-74 (DKDENRMEMQEKTEQGNSYLDFAENLPLQKLEELEAKLLEEDSEESRNSRQKR) are excised as a propeptide. The span at 60–69 (LEEDSEESRN) shows a compositional bias: basic and acidic residues. Residues 60-83 (LEEDSEESRNSRQKRCIGEGVPCD) are disordered. 3 cysteine pairs are disulfide-bonded: C75/C90, C82/C95, and C89/C110.

This sequence belongs to the neurotoxin 14 (magi-1) family. 01 (HNTX-16) subfamily. Expressed by the venom gland.

It localises to the secreted. Its function is as follows. Probable ion channel inhibitor. This chain is U11-theraphotoxin-Hhn1a, found in Cyriopagopus hainanus (Chinese bird spider).